The chain runs to 529 residues: Peptide chain release factor 3 (529 aa).

Positions 11–280 constitute a tr-type G domain; that stretch reads NKRRTFAIIS…GLTKWAPTPL (270 aa). GTP-binding positions include 20 to 27, 88 to 92, and 142 to 145; these read SHPDAGKT, DTPGH, and NKCD.

It belongs to the TRAFAC class translation factor GTPase superfamily. Classic translation factor GTPase family. PrfC subfamily.

It is found in the cytoplasm. Functionally, increases the formation of ribosomal termination complexes and stimulates activities of RF-1 and RF-2. It binds guanine nucleotides and has strong preference for UGA stop codons. It may interact directly with the ribosome. The stimulation of RF-1 and RF-2 is significantly reduced by GTP and GDP, but not by GMP. This Pseudoalteromonas translucida (strain TAC 125) protein is Peptide chain release factor 3.